We begin with the raw amino-acid sequence, 411 residues long: Replication factor C subunit 2 (411 aa).

The tract at residues 1-36 (MADFFNLKARQQAAAQASSSKTPTSKQESNRLQPWV) is disordered. The segment covering 11–27 (QQAAAQASSSKTPTSKQ) has biased composition (low complexity). Residues Val36, Arg40, 73–81 (GPPGTGKTS), Asn195, and Arg253 contribute to the ATP site.

Belongs to the activator 1 small subunits family. Heteropentamer of subunits RFC1, RFC2, RFC3, RFC4 and RFC5 that forms a complex with PCNA in the presence of ATP.

It is found in the nucleus. Functionally, the elongation of primed DNA templates by DNA polymerase delta and epsilon requires the action of the accessory proteins proliferating cell nuclear antigen (PCNA) and activator 1. Subunit 2 binds ATP and single-stranded DNA. The chain is Replication factor C subunit 2 (RFC2) from Phaeosphaeria nodorum (strain SN15 / ATCC MYA-4574 / FGSC 10173) (Glume blotch fungus).